A 7839-amino-acid chain; its full sequence is Nonribosomal peptide synthetase GRA1 (7839 aa).

A compositionally biased stretch (polar residues) spans 1–23 (MALLNGKSTLPNGHNSSIESPNG). Positions 1–26 (MALLNGKSTLPNGHNSSIESPNGYTE) are disordered. The segment at 264 to 650 (LASPNSCAVH…LGRIDDQVKI (387 aa)) is adenylation 1. The region spanning 793-866 (SAEALVLRQL…LQAEMSEKKK (74 aa)) is the Carrier 1 domain. The residue at position 827 (Ser-827) is an O-(pantetheine 4'-phosphoryl)serine. The condensation 1 stretch occupies residues 916–1332 (DIYPASPLQE…ILSPSDVAQI (417 aa)). Residues 1351 to 1742 (FFTQVKRSPD…QRKDAQLKIR (392 aa)) are adenylation 2. Positions 1880–1957 (ELETEAERTM…AMSRQATVSD (78 aa)) constitute a Carrier 2 domain. Ser-1918 carries the O-(pantetheine 4'-phosphoryl)serine modification. Positions 1997–2413 (DLYPCTPFQE…LISPSDMETI (417 aa)) are condensation 2. The tract at residues 2432-2828 (FDRRLSQKHS…GRRDTQLKIR (397 aa)) is adenylation 3. Positions 2963–3040 (IPTTQMEWNL…DLAQAIVLDT (78 aa)) constitute a Carrier 3 domain. O-(pantetheine 4'-phosphoryl)serine is present on Ser-3001. The condensation 3 stretch occupies residues 3084–3496 (DIYPCTPLQD…QVDLISDSDH (413 aa)). The interval 3520 to 3923 (RLAVSNPDAE…GRRDSQVKLR (404 aa)) is adenylation 4. The Carrier 4 domain occupies 4057-4134 (RPLTEREKDL…DMAAMTTSLS (78 aa)). Position 4095 is an O-(pantetheine 4'-phosphoryl)serine (Ser-4095). Positions 4234–4569 (NLEEFVGRQS…MMNPDDAEEI (336 aa)) are condensation 4. The interval 4591 to 4982 (HSKGCPDRIA…VSRKDTQVKF (392 aa)) is adenylation 5. Residues 5113-5189 (ALSSDEESQL…DMALCMTSAQ (77 aa)) enclose the Carrier 5 domain. Ser-5150 is subject to O-(pantetheine 4'-phosphoryl)serine. The segment at 5224 to 5653 (EDIYPCSALQ…VSPSDQAEIL (430 aa)) is condensation 5. The tract at residues 5671-6069 (FESRARLQPS…GRRDTQVKLR (399 aa)) is adenylation 6. Positions 6207–6282 (FPSSLAEQQM…HMAAIATTFT (76 aa)) constitute a Carrier 6 domain. Ser-6243 is subject to O-(pantetheine 4'-phosphoryl)serine. The condensation 6 stretch occupies residues 6321 to 6730 (QDIYPCSALQ…RLADMDLTGP (410 aa)). An adenylation 7 region spans residues 6756–7147 (EQRVKSQPDS…LGRKDSQIKL (392 aa)). Residues 7290 to 7366 (KAATPNEKTL…DLARVSRQSI (77 aa)) form the Carrier 7 domain. Ser-7327 carries the O-(pantetheine 4'-phosphoryl)serine modification. Residues 7404–7704 (HDIYPCTQVQ…LDYAKKRASS (301 aa)) are condensation7.

Belongs to the NRP synthetase family.

It functions in the pathway mycotoxin biosynthesis. Its function is as follows. Nonribosomal peptide synthetase; part of the gene cluster that mediates the biosynthesis of gramillins A and B, bicyclic lipopeptides that induce cell death in maize leaves but not in wheat leaves. The nonribosomal peptide synthetase GRA1 incorporates respectively a glutamic adic (Glu), a leucine (Leu), a serine (Ser), a hydroxyglutamine (HOGln), a 2-amino decanoic acid, and 2 cysteins (CysB and CysA). The biosynthesis of 2-amino decanoic acid incorporated in gramillins could be initiated by a fatty acid synthase composed of the alpha and beta subunits FGSG_00036 and FGSG_11656. The cytochrome P450 monooxygenase FGSG_15680 could hydroxylate the fatty acid chain. Subsequent oxidation to the ketone by the oxidoreductase FGSG_00048 and transamination by aminotransferase FGSG_00049 could form 2-amino-decanoic acid. On the other hand, FGSG_15680 could also be responsible for the HO-modified glutamine at the gamma-position. Whether hydroxylation occurs on the fully assembled product or on the Gln residue prior to assembly into the gramillins requires further proof. The thioredoxin FGSG_00043 could also be required for the disulfide-bond formation between CysA and CysB. The specific involvement of the remaining proteins from the cluster is more difficult to discern, but could have broader regulatory (FGSG_00040 and FGSG_11657) or enzymatic functions (FGSG_00044 and FGSG_00045). The final C-domain of GRA1 does not possess the expected sequence of a termination CT domain, often implicated in macrocyclization and release of a cyclopeptidein fungal NRPs; and the thioesterase FGSG_00047 may act in concert with the terminal C-domain of GRA1 to catalyze the formation of the macrocyclic anhydride and release of the products. The protein is Nonribosomal peptide synthetase GRA1 of Gibberella zeae (strain ATCC MYA-4620 / CBS 123657 / FGSC 9075 / NRRL 31084 / PH-1) (Wheat head blight fungus).